The primary structure comprises 269 residues: Malonyl-[acyl-carrier protein] O-methyltransferase (269 aa).

The protein belongs to the methyltransferase superfamily.

It catalyses the reaction malonyl-[ACP] + S-adenosyl-L-methionine = malonyl-[ACP] methyl ester + S-adenosyl-L-homocysteine. It participates in cofactor biosynthesis; biotin biosynthesis. Converts the free carboxyl group of a malonyl-thioester to its methyl ester by transfer of a methyl group from S-adenosyl-L-methionine (SAM). It allows to synthesize pimeloyl-ACP via the fatty acid synthetic pathway. The polypeptide is Malonyl-[acyl-carrier protein] O-methyltransferase (Bacillus cereus (strain ATCC 14579 / DSM 31 / CCUG 7414 / JCM 2152 / NBRC 15305 / NCIMB 9373 / NCTC 2599 / NRRL B-3711)).